We begin with the raw amino-acid sequence, 230 residues long: 7-cyano-7-deazaguanine synthase (230 aa).

8 to 18 (LSGGMDSAVVT) lines the ATP pocket. Residues cysteine 186, cysteine 196, cysteine 199, and cysteine 202 each contribute to the Zn(2+) site.

Belongs to the QueC family. Zn(2+) is required as a cofactor.

It carries out the reaction 7-carboxy-7-deazaguanine + NH4(+) + ATP = 7-cyano-7-deazaguanine + ADP + phosphate + H2O + H(+). The protein operates within purine metabolism; 7-cyano-7-deazaguanine biosynthesis. In terms of biological role, catalyzes the ATP-dependent conversion of 7-carboxy-7-deazaguanine (CDG) to 7-cyano-7-deazaguanine (preQ(0)). The protein is 7-cyano-7-deazaguanine synthase of Xylella fastidiosa (strain M12).